The following is a 329-amino-acid chain: Fructose-1,6-bisphosphatase class 1 2 (329 aa).

Positions 92, 111, 113, and 114 each coordinate Mg(2+). Substrate is bound by residues 114–117 and N206; that span reads DGSS. E278 contacts Mg(2+).

It belongs to the FBPase class 1 family. Homotetramer. Requires Mg(2+) as cofactor.

Its subcellular location is the cytoplasm. The enzyme catalyses beta-D-fructose 1,6-bisphosphate + H2O = beta-D-fructose 6-phosphate + phosphate. It participates in carbohydrate biosynthesis; gluconeogenesis. In Xanthobacter autotrophicus (strain ATCC BAA-1158 / Py2), this protein is Fructose-1,6-bisphosphatase class 1 2.